A 210-amino-acid polypeptide reads, in one-letter code: Actin-related protein 3C (210 aa).

A signal peptide spans 1 to 21 (MFESFNVPGLYIAVQAVLALA).

Belongs to the actin family. As to expression, expressed in kidney, stomach, spleen, bone marrow, uterus, testis, placenta, skeletal muscle, mammary gland, lung, fetal liver, and fetal kidney, but not detected in small intestine, brain, and thymus. Expressed in low-metastatic lung adenocarcinoma cells but not in high-metastatic ones.

Its function is as follows. May play a role in the suppression of metastatic potential in lung adenoma carcinoma cells. The polypeptide is Actin-related protein 3C (ACTR3C) (Homo sapiens (Human)).